A 591-amino-acid polypeptide reads, in one-letter code: PE-PGRS family protein PE_PGRS5 (591 aa).

The 93-residue stretch at 1 to 93 (MSFVIAQPEM…AGAYASAEAA (93 aa)) folds into the PE domain. Residues 94–591 (NAGPNMLAAV…GGKGNNGNPG (498 aa)) are PGRS. 6 stretches are compositionally biased toward gly residues: residues 303 to 324 (GAGGAGGAGGDGAPGGNGGNGG), 336 to 363 (ASGGNGATGGNGGVGAPGGAGGNGGHVS), 371 to 412 (GAGG…GDGG), 477 to 491 (SEAGDGGKGGLGGDG), 539 to 567 (AGTGGDGGVGGTGAAGGKGGAGGSGGVNG), and 579 to 591 (GATGGKGNNGNPG). Disordered stretches follow at residues 303–412 (GAGG…GDGG), 468–491 (GSVNTPIGGSEAGDGGKGGLGGDG), and 539–591 (AGTG…GNPG).

Belongs to the mycobacterial PE family. PGRS subfamily. Interacts with human TLR4.

The protein resides in the host endoplasmic reticulum. In terms of biological role, involved in endoplasmic reticulum (ER) stress-mediated apoptosis through human Toll-like receptor 4 (TLR4) signaling pathway. Localizes to the host ER, leading to ER stress, disruption of intracellular Ca(2+) homeostasis and increase of nitric oxide (NO) and reactive oxygen species (ROS) levels. Stress response results in caspase-8 activation and apoptosis of macrophage cells. Apoptosis may lead to dissemination of the bacteria, thereby spreading the disease. This chain is PE-PGRS family protein PE_PGRS5, found in Mycobacterium tuberculosis (strain ATCC 25618 / H37Rv).